The primary structure comprises 31 residues: MPTITSYFGFLLAVLTITSGLFISLRKLRLI.

The chain crosses the membrane as a helical span at residues 3-23; the sequence is TITSYFGFLLAVLTITSGLFI.

This sequence belongs to the PetL family. The 4 large subunits of the cytochrome b6-f complex are cytochrome b6, subunit IV (17 kDa polypeptide, PetD), cytochrome f and the Rieske protein, while the 4 small subunits are PetG, PetL, PetM and PetN. The complex functions as a dimer.

Its subcellular location is the plastid. It is found in the chloroplast thylakoid membrane. Its function is as follows. Component of the cytochrome b6-f complex, which mediates electron transfer between photosystem II (PSII) and photosystem I (PSI), cyclic electron flow around PSI, and state transitions. PetL is important for photoautotrophic growth as well as for electron transfer efficiency and stability of the cytochrome b6-f complex. The protein is Cytochrome b6-f complex subunit 6 of Lotus japonicus (Lotus corniculatus var. japonicus).